Reading from the N-terminus, the 1349-residue chain is Serine/threonine-protein kinase GIN4 (1349 aa).

Positions Met-1 to Asn-20 are enriched in low complexity. Residues Met-1 to Leu-30 are disordered. Phosphoserine is present on residues Ser-10, Ser-11, Ser-12, and Ser-15. In terms of domain architecture, Protein kinase spans Trp-28–Leu-288. Residues Leu-34–Val-42 and Lys-57 contribute to the ATP site. Thr-69 bears the Phosphothreonine mark. Asp-158 serves as the catalytic Proton acceptor. Residue Thr-191 is modified to Phosphothreonine. Residues Ser-294, Ser-300, and Ser-303 each carry the phosphoserine modification. Disordered stretches follow at residues Gln-366–Pro-498 and Ser-510–Asp-532. The segment covering Asn-369–Lys-384 has biased composition (low complexity). Phosphoserine is present on residues Ser-388, Ser-390, and Ser-393. Residue Thr-397 is modified to Phosphothreonine. Polar residues-rich tracts occupy residues Ile-406 to Ser-418 and Ala-426 to Asn-442. Phosphoserine is present on residues Ser-407 and Ser-409. A Phosphothreonine modification is found at Thr-412. Position 413 is a phosphoserine (Ser-413). The span at Ser-443–Tyr-470 shows a compositional bias: low complexity. A phosphoserine mark is found at Ser-455, Ser-469, Ser-473, Ser-477, and Ser-485. A compositionally biased stretch (polar residues) spans Asn-471 to Gln-488. The residue at position 556 (Ser-556) is a Phosphoserine. A compositionally biased stretch (low complexity) spans Arg-570–Lys-585. The disordered stretch occupies residues Arg-570–Ile-593. Position 634 is a phosphoserine (Ser-634). Residues Glu-661–Ile-701 are a coiled coil. A disordered region spans residues Lys-712–Lys-737. Ser-720 and Ser-746 each carry phosphoserine. A disordered region spans residues Thr-756–Asn-798. Phosphothreonine is present on residues Thr-778, Thr-869, and Thr-876. Ser-891 is modified (phosphoserine). Residue Thr-941 is modified to Phosphothreonine. Ser-973 bears the Phosphoserine mark. Phosphothreonine occurs at positions 990 and 992. The residue at position 999 (Ser-999) is a Phosphoserine. The interval Arg-1011 to Ser-1229 is disordered. Over residues Arg-1024–Arg-1040 the composition is skewed to polar residues. Residues Lys-1044 to Tyr-1053 are compositionally biased toward basic and acidic residues. Thr-1056 is modified (phosphothreonine). Phosphoserine occurs at positions 1059, 1074, 1077, 1078, 1080, and 1094. Over residues Val-1083–Ser-1094 the composition is skewed to basic and acidic residues. Thr-1095 carries the phosphothreonine modification. 2 positions are modified to phosphoserine: Ser-1097 and Ser-1098. Residue Thr-1106 is modified to Phosphothreonine. The span at Ile-1134–Ser-1149 shows a compositional bias: polar residues. Position 1154 is a phosphoserine (Ser-1154). Positions Asn-1202–Gln-1215 are enriched in low complexity. Ser-1218 carries the post-translational modification Phosphoserine.

It belongs to the protein kinase superfamily. CAMK Ser/Thr protein kinase family. NIM1 subfamily. Associates with the septin complex which consists of CDC3, CDC10, CDC11, CDC12, and SEP7. Post-translationally, hyperphosphorylated during mitosis at dozens of sites. Among these, 7 have perfect or minimal CDK consensus sites and are CDC28 targets.

Its subcellular location is the cytoplasm. The protein resides in the bud neck. It catalyses the reaction L-seryl-[protein] + ATP = O-phospho-L-seryl-[protein] + ADP + H(+). The catalysed reaction is L-threonyl-[protein] + ATP = O-phospho-L-threonyl-[protein] + ADP + H(+). In terms of biological role, serine/threonine-protein kinase which regulates the localization and the function of the septins during mitosis. Involved in the formation of the septin ring but not the basal septin band. Phosphorylates septins CDC11 and SEP7. Required for the transition from pseudohyphae to hyphae. Acts upstream of IRS4 and INP51 in regulating cell wall integrity responses. Involved in propolis-induced cell death. The polypeptide is Serine/threonine-protein kinase GIN4 (GIN4) (Candida albicans (strain SC5314 / ATCC MYA-2876) (Yeast)).